We begin with the raw amino-acid sequence, 614 residues long: MSSYSSDRDRGRDRGFGAPRFGGSRTGPLSGKKFGNPGEKLVKKKWNLDELPKFEKNFYQEHPDLARRTAQEVDTYRRSKEITVRGHNCPKPVLNFYEANFPANVMDVIARQNFTEPTAIQAQGWPVALSGLDMVGVAQTGSGKTLSYLLPAIVHINHQPFLERGDGPICLVLAPTRELAQQVQQVAAEYCRACRLKSTCIYGGAPKGPQIRDLERGVEICIATPGRLIDFLECGKTNLRRTTYLVLDEADRMLDMGFEPQIRKIVDQIRPDRQTLMWSATWPKEVRQLAEDFLKDYIHINIGALELSANHNILQIVDVCHDVEKDEKLIRLMEEIMSEKENKTIVFVETKRRCDELTRKMRRDGWPAMGIHGDKSQQERDWVLNEFKHGKAPILIATDVASRGLDVEDVKFVINYDYPNSSEDYIHRIGRTARSTKTGTAYTFFTPNNIKQVSDLISVLREANQAINPKLLQLVEDRGSGRSRGRGGMKDDRRDRYSAGKRGGFNTFRDRENYDRGYSNLLKRDFGAKTQNGVYSAANYTNGSFGSNFVSAGIQTSFRTGNPTGTYQNGYDSTQQYGSNVANMHNGMNQQAYAYPLPQAAPMIGYPMPTGYSQ.

Basic and acidic residues predominate over residues 1–15 (MSSYSSDRDRGRDRG). The tract at residues 1–39 (MSSYSSDRDRGRDRGFGAPRFGGSRTGPLSGKKFGNPGE) is disordered. Ser24 bears the Phosphoserine mark. The residue at position 32 (Lys32) is an N6-acetyllysine; alternate. Residue Lys32 forms a Glycyl lysine isopeptide (Lys-Gly) (interchain with G-Cter in SUMO2); alternate linkage. Residues Lys33 and Lys40 each carry the N6-acetyllysine modification. Lys45 participates in a covalent cross-link: Glycyl lysine isopeptide (Lys-Gly) (interchain with G-Cter in SUMO2). A Glycyl lysine isopeptide (Lys-Gly) (interchain with G-Cter in SUMO2); alternate cross-link involves residue Lys53. Residue Lys53 forms a Glycyl lysine isopeptide (Lys-Gly) (interchain with G-Cter in SUMO); alternate linkage. A Glycyl lysine isopeptide (Lys-Gly) (interchain with G-Cter in SUMO1); alternate cross-link involves residue Lys53. Positions 94–122 (LNFYEANFPANVMDVIARQNFTEPTAIQA) match the Q motif motif. Residues 114–116 (FTE), Gln121, and 138–145 (AQTGSGKT) contribute to the ATP site. One can recognise a Helicase ATP-binding domain in the interval 125-300 (WPVALSGLDM…EDFLKDYIHI (176 aa)). Lys236 carries the post-translational modification N6-acetyllysine. The DEAD box motif lies at 248-251 (DEAD). Tyr297 carries the post-translational modification Phosphotyrosine. The region spanning 328 to 475 (KLIRLMEEIM…AINPKLLQLV (148 aa)) is the Helicase C-terminal domain. Glycyl lysine isopeptide (Lys-Gly) (interchain with G-Cter in SUMO2) cross-links involve residues Lys340, Lys343, Lys388, Lys391, Lys411, Lys437, Lys451, and Lys470. The interval 477–504 (DRGSGRSRGRGGMKDDRRDRYSAGKRGG) is disordered. The segment at 477 to 614 (DRGSGRSRGR…GYPMPTGYSQ (138 aa)) is transactivation domain. Ser480 is subject to Phosphoserine. Positions 488-498 (GMKDDRRDRYS) are enriched in basic and acidic residues. Residue Lys523 forms a Glycyl lysine isopeptide (Lys-Gly) (interchain with G-Cter in SUMO2) linkage.

The protein belongs to the DEAD box helicase family. DDX5/DBP2 subfamily. As to quaternary structure, identified in the spliceosome C complex. Component of a ribonucleoprotein complex containing mRNAs and RNA-binding proteins including DDX5, HNRNPH2 and SRSF1 as well as splicing regulator ARVCF. Interacts with RBM4; the interaction occurs in an RNA-independent manner. Interacts with AGO1 and AGO2. Interacts with ESR1, AR, EP300, CREBBP, POLR2A, TP53, RUNX2 and HDAC1. Self-associates. Interacts with DDX17. Interacts with BRDT. The large PER complex involved in the repression of transcriptional termination is composed of at least PER2, CDK9, DDX5, DHX9, NCBP1 and POLR2A (active). Interacts with DHX36; this interaction occurs in a RNA-dependent manner. Interacts with NUPR1. Interacts with ERCC6. Interacts with DDX3X in the cytoplasm; this interaction may be more efficient when both proteins are unphosphorylated. In terms of processing, sumoylated; sumoylation, promoted by PIAS1, promotes interaction with HDAC1 and transcriptional repression activity. Sumoylation also significantly increases stability, and reduces polyubiquitination. Polyubiquitinated, leading to proteasomal degradation. Post-translationally, weakly phosphorylated in the G1/S phase of the cell cycle and much more at G2/M, especially at Thr and Tyr residues.

Its subcellular location is the nucleus. The protein resides in the nucleolus. It localises to the cytoplasm. The enzyme catalyses ATP + H2O = ADP + phosphate + H(+). Involved in the alternative regulation of pre-mRNA splicing; its RNA helicase activity is necessary for increasing tau exon 10 inclusion and occurs in a RBM4-dependent manner. Binds to the tau pre-mRNA in the stem-loop region downstream of exon 10. The rate of ATP hydrolysis is highly stimulated by single-stranded RNA. Involved in transcriptional regulation; the function is independent of the RNA helicase activity. Transcriptional coactivator for androgen receptor AR but probably not ESR1. Synergizes with DDX17 and SRA1 RNA to activate MYOD1 transcriptional activity and involved in skeletal muscle differentiation. Transcriptional coactivator for p53/TP53 and involved in p53/TP53 transcriptional response to DNA damage and p53/TP53-dependent apoptosis. Transcriptional coactivator for RUNX2 and involved in regulation of osteoblast differentiation. Acts as a transcriptional repressor in a promoter-specific manner; the function probably involves association with histone deacetylases, such as HDAC1. As component of a large PER complex is involved in the inhibition of 3' transcriptional termination of circadian target genes such as PER1 and NR1D1 and the control of the circadian rhythms. This Mus musculus (Mouse) protein is Probable ATP-dependent RNA helicase DDX5 (Ddx5).